The chain runs to 341 residues: HTH-type transcriptional repressor PurR (341 aa).

The HTH lacI-type domain occupies 2–56 (ATIKDVAKRANVSTTTVSHVINKTRFVAEETRNAVWTAIKELHYSPSAVARSLKV). Residues 4–23 (IKDVAKRANVSTTTVSHVIN) constitute a DNA-binding region (H-T-H motif). A DNA-binding region spans residues 48 to 56 (SAVARSLKV). Positions 73, 190, 192, 221, and 275 each coordinate hypoxanthine.

Homodimer.

It participates in purine metabolism; purine nucleotide biosynthesis [regulation]. Its function is as follows. Is the main repressor of the genes involved in the de novo synthesis of purine nucleotides, regulating purB, purC, purEK, purF, purHD, purL, purMN and guaBA expression. PurR is allosterically activated to bind its cognate DNA by binding the purine corepressors, hypoxanthine or guanine, thereby effecting transcription repression. The sequence is that of HTH-type transcriptional repressor PurR from Salmonella paratyphi A (strain ATCC 9150 / SARB42).